A 329-amino-acid polypeptide reads, in one-letter code: DNA-directed RNA polymerase subunit alpha (329 aa).

Residues 1 to 234 form an alpha N-terminal domain (alpha-NTD) region; sequence MQGSVTEFLK…EQLDAFVELR (234 aa). Residues 248–329 are alpha C-terminal domain (alpha-CTD); the sequence is FDPILLRPVD…WPPASLADDL (82 aa).

Belongs to the RNA polymerase alpha chain family. In terms of assembly, homodimer. The RNAP catalytic core consists of 2 alpha, 1 beta, 1 beta' and 1 omega subunit. When a sigma factor is associated with the core the holoenzyme is formed, which can initiate transcription.

It catalyses the reaction RNA(n) + a ribonucleoside 5'-triphosphate = RNA(n+1) + diphosphate. Its function is as follows. DNA-dependent RNA polymerase catalyzes the transcription of DNA into RNA using the four ribonucleoside triphosphates as substrates. This is DNA-directed RNA polymerase subunit alpha from Shewanella baltica (strain OS155 / ATCC BAA-1091).